Here is a 118-residue protein sequence, read N- to C-terminus: Fluoride-specific ion channel FluC 2 (118 aa).

4 helical membrane passes run 1–21 (MIEALLVATGGFFGAITRFAI), 33–53 (FPLATFLINITGAFLLGYIIG), 55–75 (GVTTGWQLLLGTGFMGAFTTF), and 91–111 (ISTFLLYLSATYIIGILFAFL). G70 and T73 together coordinate Na(+).

This sequence belongs to the fluoride channel Fluc/FEX (TC 1.A.43) family.

It localises to the cell membrane. The enzyme catalyses fluoride(in) = fluoride(out). With respect to regulation, na(+) is not transported, but it plays an essential structural role and its presence is essential for fluoride channel function. Fluoride-specific ion channel. Important for reducing fluoride concentration in the cell, thus reducing its toxicity. The sequence is that of Fluoride-specific ion channel FluC 2 from Bacillus cereus (strain ATCC 14579 / DSM 31 / CCUG 7414 / JCM 2152 / NBRC 15305 / NCIMB 9373 / NCTC 2599 / NRRL B-3711).